The sequence spans 234 residues: Gene 53 protein (234 aa).

This is Gene 53 protein (53) from Mycobacterium phage L5 (Mycobacteriophage L5).